Reading from the N-terminus, the 260-residue chain is DNA repair protein RecO (260 aa).

Belongs to the RecO family.

Functionally, involved in DNA repair and RecF pathway recombination. The polypeptide is DNA repair protein RecO (Streptococcus suis (strain 98HAH33)).